Reading from the N-terminus, the 237-residue chain is Orotidine 5'-phosphate decarboxylase (237 aa).

Substrate-binding positions include Asp-17, Lys-39, 66-75 (DLKLHDIGNT), Thr-121, Arg-182, Gln-191, Gly-211, and Arg-212. Lys-68 acts as the Proton donor in catalysis.

It belongs to the OMP decarboxylase family. Type 1 subfamily. In terms of assembly, homodimer.

The enzyme catalyses orotidine 5'-phosphate + H(+) = UMP + CO2. The protein operates within pyrimidine metabolism; UMP biosynthesis via de novo pathway; UMP from orotate: step 2/2. In terms of biological role, catalyzes the decarboxylation of orotidine 5'-monophosphate (OMP) to uridine 5'-monophosphate (UMP). This chain is Orotidine 5'-phosphate decarboxylase, found in Bradyrhizobium diazoefficiens (strain JCM 10833 / BCRC 13528 / IAM 13628 / NBRC 14792 / USDA 110).